The sequence spans 159 residues: Ribosomal RNA large subunit methyltransferase H (159 aa).

Residues Leu-76, Gly-108, and 127–132 (FGRLTL) each bind S-adenosyl-L-methionine.

The protein belongs to the RNA methyltransferase RlmH family. As to quaternary structure, homodimer.

It localises to the cytoplasm. It catalyses the reaction pseudouridine(1915) in 23S rRNA + S-adenosyl-L-methionine = N(3)-methylpseudouridine(1915) in 23S rRNA + S-adenosyl-L-homocysteine + H(+). In terms of biological role, specifically methylates the pseudouridine at position 1915 (m3Psi1915) in 23S rRNA. This is Ribosomal RNA large subunit methyltransferase H from Streptococcus pneumoniae (strain 70585).